A 136-amino-acid polypeptide reads, in one-letter code: MTTTTFFLFLIPVLAIILLAVNLIFSPHNPYQEKDSAFECGFHSFLGQNRTQFSISFFIFALLFLLFDLEILLVYPYVVSAYTNGIYGLVIMLVFFLVGTLGFAFELGKNALKIESRQVYNFNYKSWSGYSLIYNK.

3 helical membrane-spanning segments follow: residues 5 to 25 (TFFL…NLIF), 55 to 75 (ISFF…LLVY), and 85 to 105 (GIYG…GFAF).

It belongs to the complex I subunit 3 family.

Its subcellular location is the mitochondrion membrane. It carries out the reaction a ubiquinone + NADH + 5 H(+)(in) = a ubiquinol + NAD(+) + 4 H(+)(out). Functionally, core subunit of the mitochondrial membrane respiratory chain NADH dehydrogenase (Complex I) that is believed to belong to the minimal assembly required for catalysis. Complex I functions in the transfer of electrons from NADH to the respiratory chain. The immediate electron acceptor for the enzyme is believed to be ubiquinone. This Emericella nidulans (Aspergillus nidulans) protein is NADH-ubiquinone oxidoreductase chain 3 (nd3).